The following is a 382-amino-acid chain: Methenyltetrahydrofolate synthase domain-containing protein (382 aa).

One can recognise an RRM domain in the interval 306–382 (TTVYLSDIPP…QAKCVSSQKM (77 aa)).

The chain is Methenyltetrahydrofolate synthase domain-containing protein (mthfsd) from Danio rerio (Zebrafish).